The following is a 187-amino-acid chain: Glutathione peroxidase 7 (187 aa).

The first 19 residues, methionine 1–alanine 19, serve as a signal peptide directing secretion. Cysteine 57 is a catalytic residue.

The protein belongs to the glutathione peroxidase family. In terms of tissue distribution, expressed in esophageal epithelial cells; expression is up-regulated after exposure to acidic bile acids.

It localises to the secreted. It carries out the reaction 2 glutathione + H2O2 = glutathione disulfide + 2 H2O. It protects esophageal epithelia from hydrogen peroxide-induced oxidative stress. It suppresses acidic bile acid-induced reactive oxygen species (ROS) and protects against oxidative DNA damage and double-strand breaks. This is Glutathione peroxidase 7 (GPX7) from Homo sapiens (Human).